The following is a 295-amino-acid chain: uncharacterized protein (295 aa).

Positions 1 to 19 (MFKKYIFILILFIASIARA) are cleaved as a signal peptide. Residues 275 to 295 (RNNPPLKNNNAKGKNPYDTNK) are disordered. Low complexity predominate over residues 276–295 (NNPPLKNNNAKGKNPYDTNK).

This is an uncharacterized protein from Rickettsia conorii (strain ATCC VR-613 / Malish 7).